The chain runs to 300 residues: Endonuclease III-like protein 1 (300 aa).

Residues 1-19 (MNSGVRMVTRSRSRATRIA) constitute a mitochondrion transit peptide. The tract at residues 1–53 (MNSGVRMVTRSRSRATRIASEGCREELAPREAAAEGRKSHRPVRHPRRTQKTH) is disordered. Positions 22-37 (GCREELAPREAAAEGR) are enriched in basic and acidic residues. The segment covering 38–51 (KSHRPVRHPRRTQK) has biased composition (basic residues). A HhH domain is found at 187 to 211 (RYEGDIPASVAELVALPGVGPKMAH). Lysine 208 functions as the Nucleophile; for N-glycosylase activity in the catalytic mechanism. Residues cysteine 278, cysteine 285, cysteine 288, and cysteine 294 each contribute to the [4Fe-4S] cluster site.

The protein belongs to the Nth/MutY family. In terms of assembly, interacts with YBX1. Interacts with ERCC5/XPG; the interaction stimulates NTHL1 activity and NTHL1 binding to its DNA substrate. Requires [4Fe-4S] cluster as cofactor. In terms of processing, ubiquitinated by TRIM26; leading to proteasomal degradation. In terms of tissue distribution, widely expressed.

Its subcellular location is the nucleus. The protein localises to the mitochondrion. It catalyses the reaction 2'-deoxyribonucleotide-(2'-deoxyribose 5'-phosphate)-2'-deoxyribonucleotide-DNA = a 3'-end 2'-deoxyribonucleotide-(2,3-dehydro-2,3-deoxyribose 5'-phosphate)-DNA + a 5'-end 5'-phospho-2'-deoxyribonucleoside-DNA + H(+). Functionally, bifunctional DNA N-glycosylase with associated apurinic/apyrimidinic (AP) lyase function that catalyzes the first step in base excision repair (BER), the primary repair pathway for the repair of oxidative DNA damage. The DNA N-glycosylase activity releases the damaged DNA base from DNA by cleaving the N-glycosidic bond, leaving an AP site. The AP lyase activity cleaves the phosphodiester bond 3' to the AP site by a beta-elimination. Primarily recognizes and repairs oxidative base damage of pyrimidines. This is Endonuclease III-like protein 1 (Nthl1) from Mus musculus (Mouse).